Reading from the N-terminus, the 135-residue chain is MAISTNKLFISGSRVSIMSLELIVPNEWNVIPRRTLETELLRIISAKQSVDQTTSGVIGFYNGIVAESRKLSGYLWFRKIGDHSKKPYVNWYQVMTIKPKESPATSSEDISSCSDCDSERLQSDDGCCSTCGEEE.

The tract at residues 100–125 (KESPATSSEDISSCSDCDSERLQSDD) is disordered. A compositionally biased stretch (low complexity) spans 106–115 (SSEDISSCSD).

This is an uncharacterized protein from Microplitis demolitor (Parasitoid wasp).